Here is a 168-residue protein sequence, read N- to C-terminus: Profilin-3 (168 aa).

Residues 14 to 36 (LSLEHSDKPQRRSRAKVKKKKKT) are disordered. Residues 24-36 (RRSRAKVKKKKKT) show a composition bias toward basic residues.

The protein belongs to the profilin family. Occurs in many kinds of cells as a complex with monomeric actin in a 1:1 ratio. Binding to the poly-proline motif of formins induces formation of oligomers through the N-terminal hydrophobic residues of PRF3. Expressed in roots, rosette leaves, cauline leaves, stems and flowers.

Its subcellular location is the cytoplasm. The protein resides in the cytoskeleton. Binds to actin monomers and regulates the organization of the actin cytoskeleton. Can increase the critical concentration (Cc) of actin assembly in vitro. Acts as a downstream effector of the hydrogen sulfide signaling to regulate the assembly and depolymerization of F-actin. At high concentrations, profilin prevents the polymerization of actin, whereas it enhances it at low concentrations. Binding to the poly-proline motif of formin induces oligomerization of PRF3. PRF3 oligomers inhibit formin-mediated actin assembly to modulate plant immunity triggered by pathogen-associated molecular patterns (PAMPs). This is Profilin-3 from Arabidopsis thaliana (Mouse-ear cress).